A 293-amino-acid chain; its full sequence is Elongation factor Ts (293 aa).

The segment at 80–83 (TDFV) is involved in Mg(2+) ion dislocation from EF-Tu.

This sequence belongs to the EF-Ts family.

Its subcellular location is the cytoplasm. In terms of biological role, associates with the EF-Tu.GDP complex and induces the exchange of GDP to GTP. It remains bound to the aminoacyl-tRNA.EF-Tu.GTP complex up to the GTP hydrolysis stage on the ribosome. The chain is Elongation factor Ts from Lacticaseibacillus casei (strain BL23) (Lactobacillus casei).